Here is a 97-residue protein sequence, read N- to C-terminus: Putative pterin-4-alpha-carbinolamine dehydratase (97 aa).

This sequence belongs to the pterin-4-alpha-carbinolamine dehydratase family.

The catalysed reaction is (4aS,6R)-4a-hydroxy-L-erythro-5,6,7,8-tetrahydrobiopterin = (6R)-L-erythro-6,7-dihydrobiopterin + H2O. The sequence is that of Putative pterin-4-alpha-carbinolamine dehydratase from Dinoroseobacter shibae (strain DSM 16493 / NCIMB 14021 / DFL 12).